Reading from the N-terminus, the 327-residue chain is Metaxin-1 homolog (327 aa).

Residues 281–301 (IVAGVGAVLAMGAFAAWRGIY) form a helical membrane-spanning segment.

This sequence belongs to the metaxin family. Associates with the mitochondrial contact site and cristae organizing system (MICOS) complex (also known as MINOS or MitOS complex).

It is found in the mitochondrion outer membrane. Functionally, involved in transport of proteins into the mitochondrion. Essential for embryonic development. This is Metaxin-1 homolog from Drosophila melanogaster (Fruit fly).